The sequence spans 457 residues: Argininosuccinate lyase (457 aa).

The protein belongs to the lyase 1 family. Argininosuccinate lyase subfamily.

Its subcellular location is the cytoplasm. It catalyses the reaction 2-(N(omega)-L-arginino)succinate = fumarate + L-arginine. It functions in the pathway amino-acid biosynthesis; L-arginine biosynthesis; L-arginine from L-ornithine and carbamoyl phosphate: step 3/3. The chain is Argininosuccinate lyase from Escherichia coli O157:H7.